We begin with the raw amino-acid sequence, 207 residues long: Mediator of RNA polymerase II transcription subunit 18 (207 aa).

This sequence belongs to the Mediator complex subunit 18 family. As to quaternary structure, component of the Mediator complex. Interacts with med17, prk1 and rbp1.

It is found in the nucleus. Component of the Mediator complex, a coactivator involved in the regulated transcription of nearly all RNA polymerase II-dependent genes. Mediator functions as a bridge to convey information from gene-specific regulatory proteins to the basal RNA polymerase II transcription machinery. Mediator is recruited to promoters by direct interactions with regulatory proteins and serves as a scaffold for the assembly of a functional preinitiation complex with RNA polymerase II and the general transcription factors. This is Mediator of RNA polymerase II transcription subunit 18 (med18) from Schizosaccharomyces pombe (strain 972 / ATCC 24843) (Fission yeast).